The sequence spans 187 residues: Large ribosomal subunit protein uL22 (187 aa).

The span at 159–171 (VSKPTDDAAPKVK) shows a compositional bias: basic and acidic residues. Positions 159–187 (VSKPTDDAAPKVKKESKRKQRRQLARGEF) are disordered. Residues 172-187 (KESKRKQRRQLARGEF) show a composition bias toward basic residues.

It belongs to the universal ribosomal protein uL22 family.

This is Large ribosomal subunit protein uL22 (rpl-17) from Caenorhabditis elegans.